The chain runs to 301 residues: tRNA dimethylallyltransferase (301 aa).

12–19 contacts ATP; sequence GPTAVGKT. 14–19 contacts substrate; it reads TAVGKT. The interval 37-40 is interaction with substrate tRNA; it reads DSQQ.

The protein belongs to the IPP transferase family. In terms of assembly, monomer. It depends on Mg(2+) as a cofactor.

It catalyses the reaction adenosine(37) in tRNA + dimethylallyl diphosphate = N(6)-dimethylallyladenosine(37) in tRNA + diphosphate. Catalyzes the transfer of a dimethylallyl group onto the adenine at position 37 in tRNAs that read codons beginning with uridine, leading to the formation of N6-(dimethylallyl)adenosine (i(6)A). This chain is tRNA dimethylallyltransferase, found in Streptococcus uberis (strain ATCC BAA-854 / 0140J).